A 221-amino-acid chain; its full sequence is Small ribosomal subunit protein uS5 (221 aa).

The region spanning Leu-46–Ile-109 is the S5 DRBM domain.

This sequence belongs to the universal ribosomal protein uS5 family. Part of the 30S ribosomal subunit. Contacts protein S4.

Functionally, with S4 and S12 plays an important role in translational accuracy. This Thermoplasma acidophilum (strain ATCC 25905 / DSM 1728 / JCM 9062 / NBRC 15155 / AMRC-C165) protein is Small ribosomal subunit protein uS5.